The sequence spans 704 residues: Capsule polysaccharide modification protein LipA (704 aa).

Its subcellular location is the cell inner membrane. Involved in the phospholipid modification of the capsular polysaccharide, a strong requirement for its translocation to the cell surface. This Neisseria meningitidis serogroup B (strain ATCC BAA-335 / MC58) protein is Capsule polysaccharide modification protein LipA (lipA).